The following is a 399-amino-acid chain: Yellow-related salivary protein M10 (399 aa).

The N-terminal stretch at 1–18 (MKFILSVLALASFQHVFC) is a signal peptide. Residues Asn29 and Asn83 are each glycosylated (N-linked (GlcNAc...) asparagine).

The protein belongs to the major royal jelly protein family. As to expression, salivary gland (at protein level).

It localises to the secreted. Its function is as follows. Probably modulates blood feeding of sand flies on vertebrate species by binding and sequestering different mediators involved in the host response. Functions as a chemoattractant for host neutrophils; likely acts through a G-protein-coupled receptor and effect is dependent on calcium influx and phosphatidylinositol 3-kinases (PI3K) activity. (Microbial infection) Probably enhances infection caused by Leishmania species in the host through augmentation of host neutrophil recruitment into the skin. The sequence is that of Yellow-related salivary protein M10 from Phlebotomus duboscqi (Sandfly).